Reading from the N-terminus, the 149-residue chain is HTH-type transcriptional regulator LrpB (149 aa).

In terms of domain architecture, HTH asnC-type spans I3 to S64. A DNA-binding region (H-T-H motif) is located at residues W22–K41.

Its function is as follows. Negative regulation of glyA transcription and kinB-dependent sporulation. This chain is HTH-type transcriptional regulator LrpB (lrpB), found in Bacillus subtilis (strain 168).